Reading from the N-terminus, the 264-residue chain is Thymidylate synthase (264 aa).

Position 21 (Arg21) interacts with dUMP. His51 contacts (6R)-5,10-methylene-5,6,7,8-tetrahydrofolate. 126 to 127 contacts dUMP; it reads RR. The active-site Nucleophile is the Cys146. DUMP-binding positions include 166 to 169, Asn177, and 207 to 209; these read RSGD and HLY. A (6R)-5,10-methylene-5,6,7,8-tetrahydrofolate-binding site is contributed by Asp169. (6R)-5,10-methylene-5,6,7,8-tetrahydrofolate is bound at residue Ala263.

The protein belongs to the thymidylate synthase family. Bacterial-type ThyA subfamily. Homodimer.

The protein resides in the cytoplasm. The enzyme catalyses dUMP + (6R)-5,10-methylene-5,6,7,8-tetrahydrofolate = 7,8-dihydrofolate + dTMP. It functions in the pathway pyrimidine metabolism; dTTP biosynthesis. In terms of biological role, catalyzes the reductive methylation of 2'-deoxyuridine-5'-monophosphate (dUMP) to 2'-deoxythymidine-5'-monophosphate (dTMP) while utilizing 5,10-methylenetetrahydrofolate (mTHF) as the methyl donor and reductant in the reaction, yielding dihydrofolate (DHF) as a by-product. This enzymatic reaction provides an intracellular de novo source of dTMP, an essential precursor for DNA biosynthesis. The chain is Thymidylate synthase from Xanthomonas axonopodis pv. citri (strain 306).